A 479-amino-acid polypeptide reads, in one-letter code: MNTILAQQIANEGGVEAWMIAQQHKSLLRFLTCGSVDDGKSTLIGRLLHDTLQIYEDQLSSLHNDSKRHGTQGEKLDLALLVDGLQAEREQGITIDVAYRYFSTEKRKFIIADTPGHEQYTRNMATGASTCDLAILLIDARKGVLDQTRRHSFISTLLGIKHLVVAINKMDLVDYREETFARIREDYLTFAEQLPGDLDIRFVPLSALEGDNVAAQSANMRWYSGPTLLEVLETVDIQRAVDRQPMRFPVQYVNRPNLDFRGYAGTLASGSVKVGERIKVLPSGVESSVARIVTFDGDKEEACAGEAITLVLNDDIDISRGDLLLAANETLAPARHAAIDVVWMAEQPLAPGQSYDVKLAGKKTRARIEAIRYQIDINNLTQRDVESLPLNGIGLVEMTFDEPLALDIYQQNPVTGGLIFIDRLSNVTVGAGMVRELDERGATPPVEYSAFELELNALVRRHFPHWDARDLLGDKHGAA.

The region spanning 25-239 (KSLLRFLTCG…EVLETVDIQR (215 aa)) is the tr-type G domain. Positions 34–41 (GSVDDGKS) are G1. 34-41 (GSVDDGKS) is a binding site for GTP. The interval 92 to 96 (GITID) is G2. Residues 113–116 (DTPG) form a G3 region. GTP is bound by residues 113–117 (DTPGH) and 168–171 (NKMD). Positions 168 to 171 (NKMD) are G4. Residues 206-208 (SAL) are G5.

This sequence belongs to the TRAFAC class translation factor GTPase superfamily. Classic translation factor GTPase family. CysN/NodQ subfamily. Heterodimer composed of CysD, the smaller subunit, and CysN.

The catalysed reaction is sulfate + ATP + H(+) = adenosine 5'-phosphosulfate + diphosphate. It functions in the pathway sulfur metabolism; hydrogen sulfide biosynthesis; sulfite from sulfate: step 1/3. In terms of biological role, with CysD forms the ATP sulfurylase (ATPS) that catalyzes the adenylation of sulfate producing adenosine 5'-phosphosulfate (APS) and diphosphate, the first enzymatic step in sulfur assimilation pathway. APS synthesis involves the formation of a high-energy phosphoric-sulfuric acid anhydride bond driven by GTP hydrolysis by CysN coupled to ATP hydrolysis by CysD. This Salmonella dublin (strain CT_02021853) protein is Sulfate adenylyltransferase subunit 1.